A 444-amino-acid chain; its full sequence is Phosphoglucosamine mutase (444 aa).

Residue serine 104 is the Phosphoserine intermediate of the active site. 4 residues coordinate Mg(2+): serine 104, aspartate 243, aspartate 245, and aspartate 247. Serine 104 is modified (phosphoserine).

It belongs to the phosphohexose mutase family. Mg(2+) serves as cofactor. Activated by phosphorylation.

The enzyme catalyses alpha-D-glucosamine 1-phosphate = D-glucosamine 6-phosphate. In terms of biological role, catalyzes the conversion of glucosamine-6-phosphate to glucosamine-1-phosphate. The polypeptide is Phosphoglucosamine mutase (Neisseria gonorrhoeae (strain ATCC 700825 / FA 1090)).